The primary structure comprises 1902 residues: PII-type proteinase (1902 aa).

Residues 1–33 form the signal peptide; sequence MQRKKKGLSILLAGTVALGALAVLPVGEIQAKA. The propeptide occupies 34 to 187; it reads AISQQTKGSS…VTLAKVYYPT (154 aa). The Peptidase S8 domain occupies 191-697; the sequence is ANSMANVQAV…AGLVDVKAAI (507 aa). Residues aspartate 217, histidine 281, and serine 620 each act as charge relay system in the active site. Positions 1796 to 1874 are disordered; the sequence is GKGDGTTGTS…GALPKTGETT (79 aa). The span at 1797-1812 shows a compositional bias: gly residues; that stretch reads KGDGTTGTSDKGGGQG. Positions 1830-1843 are enriched in polar residues; the sequence is SQPSSGGNIPTNPA. The short motif at 1867–1871 is the LPXTG sorting signal element; sequence LPKTG. Threonine 1870 is modified (pentaglycyl murein peptidoglycan amidated threonine). Positions 1871 to 1902 are cleaved as a propeptide — removed by sortase; it reads GETTERPAFGFLGVIVVSLMGVLGLKRKQREE.

It belongs to the peptidase S8 family.

Its subcellular location is the secreted. The protein localises to the cell wall. The catalysed reaction is Endopeptidase activity with very broad specificity, although some subsite preference have been noted, e.g. large hydrophobic residues in the P1 and P4 positions, and Pro in the P2 position. Best known for its action on caseins, although it has been shown to hydrolyze hemoglobin and oxidized insulin B-chain.. In terms of biological role, protease which breaks down milk proteins during the growth of the bacteria on milk. The sequence is that of PII-type proteinase (prt) from Lactococcus lactis subsp. cremoris (Streptococcus cremoris).